Consider the following 210-residue polypeptide: DNA dC-&gt;dU-editing enzyme APOBEC-3H (210 aa).

One can recognise a CMP/dCMP-type deaminase domain in the interval 4–126 (LTAKTFSLQF…PNYQEGLLLL (123 aa)). Position 54 (His54) interacts with Zn(2+). Glu56 (proton donor) is an active-site residue. Zn(2+) is bound by residues Cys85 and Cys88. A necessary and sufficient for localization to the cytoplasm region spans residues 182–210 (SRSVDVLENGLRSLQLGPVTPSSSIRNSR).

It belongs to the cytidine and deoxycytidylate deaminase family. As to quaternary structure, homodimer. Requires Zn(2+) as cofactor.

It is found in the cytoplasm. It carries out the reaction a 2'-deoxycytidine in single-stranded DNA + H2O + H(+) = a 2'-deoxyuridine in single-stranded DNA + NH4(+). Its activity is regulated as follows. Antiviral activity is neutralized by the simian immunodeficiency virus rhesus (SIV-mac) virion infectivity factor (VIF). Its function is as follows. DNA deaminase (cytidine deaminase) which acts as an inhibitor of retrovirus replication and retrotransposon mobility via deaminase-dependent and -independent mechanisms. Exhibits antiviral activity against vif-deficient HIV-1. After the penetration of retroviral nucleocapsids into target cells of infection and the initiation of reverse transcription, it can induce the conversion of cytosine to uracil in the minus-sense single-strand viral DNA, leading to G-to-A hypermutations in the subsequent plus-strand viral DNA. The resultant detrimental levels of mutations in the proviral genome, along with a deamination-independent mechanism that works prior to the proviral integration, together exert efficient antiretroviral effects in infected target cells. Selectively targets single-stranded DNA and does not deaminate double-stranded DNA or single- or double-stranded RNA. The polypeptide is DNA dC-&gt;dU-editing enzyme APOBEC-3H (Macaca mulatta (Rhesus macaque)).